The sequence spans 1396 residues: DNA-directed RNA polymerase subunit beta' (1396 aa).

Residues Cys-73, Cys-75, Cys-88, and Cys-91 each coordinate Zn(2+). Mg(2+) contacts are provided by Asp-467, Asp-469, and Asp-471. Cys-817, Cys-891, Cys-898, and Cys-901 together coordinate Zn(2+).

Belongs to the RNA polymerase beta' chain family. As to quaternary structure, the RNAP catalytic core consists of 2 alpha, 1 beta, 1 beta' and 1 omega subunit. When a sigma factor is associated with the core the holoenzyme is formed, which can initiate transcription. Mg(2+) is required as a cofactor. The cofactor is Zn(2+).

The catalysed reaction is RNA(n) + a ribonucleoside 5'-triphosphate = RNA(n+1) + diphosphate. Its function is as follows. DNA-dependent RNA polymerase catalyzes the transcription of DNA into RNA using the four ribonucleoside triphosphates as substrates. The sequence is that of DNA-directed RNA polymerase subunit beta' from Orientia tsutsugamushi (strain Ikeda) (Rickettsia tsutsugamushi).